A 358-amino-acid chain; its full sequence is Aminomethyltransferase (358 aa).

It belongs to the GcvT family. As to quaternary structure, the glycine cleavage system is composed of four proteins: P, T, L and H.

It carries out the reaction N(6)-[(R)-S(8)-aminomethyldihydrolipoyl]-L-lysyl-[protein] + (6S)-5,6,7,8-tetrahydrofolate = N(6)-[(R)-dihydrolipoyl]-L-lysyl-[protein] + (6R)-5,10-methylene-5,6,7,8-tetrahydrofolate + NH4(+). Its function is as follows. The glycine cleavage system catalyzes the degradation of glycine. This is Aminomethyltransferase from Francisella tularensis subsp. holarctica (strain FTNF002-00 / FTA).